We begin with the raw amino-acid sequence, 495 residues long: Serine/threonine-protein phosphatase 2A regulatory subunit sur-6 (495 aa).

Residues 1–27 (MVMEVDEPAVAATTSQNQPQEHANDFD) form a disordered region. Residues 12–21 (ATTSQNQPQE) are compositionally biased toward polar residues. WD repeat units lie at residues 64–103 (TEAD…KYVK), 130–171 (EIDE…RKIG), 215–253 (AHTY…ESFN), 264–304 (ELTE…LCDA), 323–361 (EIIA…QPVE), and 378–419 (ENDS…DAKT). The segment at 439 to 459 (SAKRKRNNLSSSGETTEEDLS) is disordered. One copy of the WD 7 repeat lies at 464-495 (QFDRKILHTAWHPKDNIIALAATNNLYIFSDV).

This sequence belongs to the phosphatase 2A regulatory subunit B family. In terms of assembly, part of a complex consisting of a common heterodimeric core enzyme, composed of catalytic subunit let-92 and constant regulatory subunit paa-1, that associates with a variety of regulatory subunits which confer distinct properties to the holoenzyme. Interacts with let-92.

It is found in the cytoplasm. Its function is as follows. Probable regulatory subunit of serine/threonine phosphatase let-92. Together with let-92 and constant regulatory subunit paa-1, positively regulates centriole duplication during early embryonic cell divisions by preventing the degradation of sas-5 and kinase zyg-1. In addition, during vulva development, may play a role with phosphatase let-92 and regulatory subunit paa-1 in the induction of vulva cell precursors by positively regulating let-60/Ras-MAP kinase signaling, probably by promoting lin-45 activation. In intestinal epithelial cells, may play a role in the late secretory pathway probably by regulating the exocyst, a protein complex involved in targeting secretory vesicles to the plasma membrane. The sequence is that of Serine/threonine-protein phosphatase 2A regulatory subunit sur-6 from Caenorhabditis elegans.